Here is a 599-residue protein sequence, read N- to C-terminus: Aspartate--tRNA(Asp/Asn) ligase (599 aa).

An L-aspartate-binding site is contributed by glutamate 169. The interval 193–196 is aspartate; the sequence is QLFK. Position 215 (arginine 215) interacts with L-aspartate. ATP is bound by residues 215 to 217 and glutamine 224; that span reads RDE. Histidine 447 contributes to the L-aspartate binding site. Glutamate 481 is an ATP binding site. Arginine 488 contacts L-aspartate. 533-536 provides a ligand contact to ATP; that stretch reads GWDR.

The protein belongs to the class-II aminoacyl-tRNA synthetase family. Type 1 subfamily. As to quaternary structure, homodimer.

The protein localises to the cytoplasm. The enzyme catalyses tRNA(Asx) + L-aspartate + ATP = L-aspartyl-tRNA(Asx) + AMP + diphosphate. Aspartyl-tRNA synthetase with relaxed tRNA specificity since it is able to aspartylate not only its cognate tRNA(Asp) but also tRNA(Asn). Reaction proceeds in two steps: L-aspartate is first activated by ATP to form Asp-AMP and then transferred to the acceptor end of tRNA(Asp/Asn). The polypeptide is Aspartate--tRNA(Asp/Asn) ligase (Pseudarthrobacter chlorophenolicus (strain ATCC 700700 / DSM 12829 / CIP 107037 / JCM 12360 / KCTC 9906 / NCIMB 13794 / A6) (Arthrobacter chlorophenolicus)).